The primary structure comprises 238 residues: Ciliary microtubule associated protein 1B (238 aa).

One copy of the STPGR repeat lies at 182–207 (PGPCAYHVVNPMIYKTRAPQFTMLGR). The disordered stretch occupies residues 206-238 (GRTLPPRENTKKPGPASYSVDKVVWSRGSRGRG).

It belongs to the CIMAP family.

It localises to the cell projection. It is found in the cilium. The protein resides in the flagellum. The polypeptide is Ciliary microtubule associated protein 1B (Cimap1b) (Mus musculus (Mouse)).